The following is a 305-amino-acid chain: Ribonuclease Z (305 aa).

Residues histidine 61, histidine 63, aspartate 65, histidine 66, histidine 138, aspartate 208, and histidine 266 each contribute to the Zn(2+) site. Aspartate 65 serves as the catalytic Proton acceptor.

This sequence belongs to the RNase Z family. In terms of assembly, homodimer. Zn(2+) is required as a cofactor.

The catalysed reaction is Endonucleolytic cleavage of RNA, removing extra 3' nucleotides from tRNA precursor, generating 3' termini of tRNAs. A 3'-hydroxy group is left at the tRNA terminus and a 5'-phosphoryl group is left at the trailer molecule.. Zinc phosphodiesterase, which displays some tRNA 3'-processing endonuclease activity. Probably involved in tRNA maturation, by removing a 3'-trailer from precursor tRNA. In Methanosarcina acetivorans (strain ATCC 35395 / DSM 2834 / JCM 12185 / C2A), this protein is Ribonuclease Z.